Reading from the N-terminus, the 880-residue chain is Translation initiation factor IF-2 (880 aa).

Residues 143-228 (EAEAKAKAKA…EAERNGDHHI (86 aa)) show a composition bias toward basic and acidic residues. The disordered stretch occupies residues 143-289 (EAEAKAKAKA…APESMAHGFN (147 aa)). Positions 249–262 (GRRARNKSNAKKRG) are enriched in basic residues. Residues 380–549 (SRAPVVTIMG…LLQAEVLELK (170 aa)) enclose the tr-type G domain. The interval 389-396 (GHVDHGKT) is G1. Residue 389–396 (GHVDHGKT) participates in GTP binding. A G2 region spans residues 414 to 418 (GITQH). The segment at 435–438 (DTPG) is G3. GTP is bound by residues 435–439 (DTPGH) and 489–492 (NKMD). The G4 stretch occupies residues 489 to 492 (NKMD). Positions 525-527 (SAK) are G5.

It belongs to the TRAFAC class translation factor GTPase superfamily. Classic translation factor GTPase family. IF-2 subfamily.

The protein localises to the cytoplasm. In terms of biological role, one of the essential components for the initiation of protein synthesis. Protects formylmethionyl-tRNA from spontaneous hydrolysis and promotes its binding to the 30S ribosomal subunits. Also involved in the hydrolysis of GTP during the formation of the 70S ribosomal complex. This chain is Translation initiation factor IF-2, found in Shewanella putrefaciens (strain CN-32 / ATCC BAA-453).